The primary structure comprises 85 residues: Putative membrane protein insertion efficiency factor (85 aa).

This sequence belongs to the UPF0161 family.

It localises to the cell inner membrane. Functionally, could be involved in insertion of integral membrane proteins into the membrane. The polypeptide is Putative membrane protein insertion efficiency factor (Shewanella woodyi (strain ATCC 51908 / MS32)).